A 230-amino-acid polypeptide reads, in one-letter code: Fibrillarin-like rRNA/tRNA 2'-O-methyltransferase (230 aa).

Residues 89–90 (TT), 107–108 (EV), 132–133 (DA), and 152–155 (DISQ) contribute to the S-adenosyl-L-methionine site.

The protein belongs to the methyltransferase superfamily. Fibrillarin family. Interacts with nop5. Component of box C/D small ribonucleoprotein (sRNP) particles that contain rpl7ae, FlpA and nop5, plus a guide RNA.

In terms of biological role, involved in pre-rRNA and tRNA processing. Utilizes the methyl donor S-adenosyl-L-methionine to catalyze the site-specific 2'-hydroxyl methylation of ribose moieties in rRNA and tRNA. Site specificity is provided by a guide RNA that base pairs with the substrate. Methylation occurs at a characteristic distance from the sequence involved in base pairing with the guide RNA. The sequence is that of Fibrillarin-like rRNA/tRNA 2'-O-methyltransferase from Thermoplasma acidophilum (strain ATCC 25905 / DSM 1728 / JCM 9062 / NBRC 15155 / AMRC-C165).